A 274-amino-acid chain; its full sequence is Pre-rRNA-processing protein PNO1 (274 aa).

Residues 1 to 70 (MVAPTALKKA…GSRKTHESKT (70 aa)) form a disordered region. Over residues 33 to 48 (SIDEDDDDDVLLDDSD) the composition is skewed to acidic residues. At serine 47 the chain carries Phosphoserine. Threonine 51 is subject to Phosphothreonine. The span at 51-69 (TAKEEVEGEEGSRKTHESK) shows a compositional bias: basic and acidic residues. The 53-residue stretch at 195–247 (GDHLSRAIGRIAGKDGKTKFAIENATRTRIVLADSKIHILGGFTHIRMARESV) folds into the KH domain.

The protein belongs to the PNO1 family. Component of the small ribosomal subunit, ribosomal RNA processing complex (SSU RRP complex). Interacts with NOB1.

The protein resides in the cytoplasm. Its subcellular location is the nucleus. It is found in the nucleolus. Functionally, required for small ribosomal subunit (SSU) synthesis. Has a role in the processing of early nucleolar and late cytoplasmic pre-RNA species. Recruits DIM1 to nucleolar pre-RNAs. Indirectly required for cleavage at the A2 site of the 20S pre-rRNA, forming 18S rRNA, and at A1 and A2 sites of other pre-rRNAs. This is Pre-rRNA-processing protein PNO1 (PNO1) from Saccharomyces cerevisiae (strain ATCC 204508 / S288c) (Baker's yeast).